The following is an 812-amino-acid chain: Valine--tRNA ligase (812 aa).

Residues 46-56 (PTVSGQLHIGH) carry the 'HIGH' region motif. The 'KMSKS' region signature appears at 536–540 (KMSKS). ATP is bound at residue Lys539.

The protein belongs to the class-I aminoacyl-tRNA synthetase family. ValS type 2 subfamily. As to quaternary structure, monomer.

It is found in the cytoplasm. The enzyme catalyses tRNA(Val) + L-valine + ATP = L-valyl-tRNA(Val) + AMP + diphosphate. In terms of biological role, catalyzes the attachment of valine to tRNA(Val). As ValRS can inadvertently accommodate and process structurally similar amino acids such as threonine, to avoid such errors, it has a 'posttransfer' editing activity that hydrolyzes mischarged Thr-tRNA(Val) in a tRNA-dependent manner. This chain is Valine--tRNA ligase, found in Rickettsia bellii (strain OSU 85-389).